The primary structure comprises 292 residues: Cholesterol ring-cleaving hydrolase IpdA subunit (292 aa).

The protein belongs to the 3-oxoacid CoA-transferase subunit A family. In terms of assembly, heterotetramer composed of 2 IpdA subunits and 2 IpdB subunits.

The catalysed reaction is (3E)-2-(2-carboxylatoethyl)-3-methyl-6-oxocyclohex-1-ene-1-carboxyl-CoA + H2O = 6-methyl-3,7-dioxodecanedioyl-CoA. The protein operates within steroid metabolism; cholesterol degradation. Functionally, involved in the final steps of cholesterol and steroid degradation. Opens the last steroid ring of cholesterol by catalyzing the hydrolysis of (3E)-2-(2-carboxylatoethyl)-3-methyl-6-oxocyclohex-1-ene-1-carboxyl-CoA (COCHEA-CoA) to 6-methyl-3,7-dioxodecanedioyl-CoA (MeDODA-CoA). This is Cholesterol ring-cleaving hydrolase IpdA subunit from Mycobacterium tuberculosis (strain CDC 1551 / Oshkosh).